A 354-amino-acid polypeptide reads, in one-letter code: uncharacterized protein (354 aa).

The next 9 membrane-spanning stretches (helical) occupy residues 9 to 29 (MGKI…LIFS), 31 to 51 (ISIN…ISFT), 76 to 96 (NFGI…LIWV), 109 to 129 (FLNV…AIVV), 144 to 164 (IIFS…VLLI), 185 to 205 (GILV…ALGV), 278 to 298 (YGTL…GFFY), 306 to 326 (GIYL…IESG), and 327 to 347 (ILDI…IYAI).

It is found in the cell membrane. This is an uncharacterized protein from Methanocaldococcus jannaschii (strain ATCC 43067 / DSM 2661 / JAL-1 / JCM 10045 / NBRC 100440) (Methanococcus jannaschii).